The primary structure comprises 125 residues: Small ribosomal subunit protein uS13 (125 aa).

The segment at 91-125 (HRRSLPVRGQNTQTNARTRKGKRKTVAGKKKAARK) is disordered. The span at 107-125 (RTRKGKRKTVAGKKKAARK) shows a compositional bias: basic residues.

The protein belongs to the universal ribosomal protein uS13 family. In terms of assembly, part of the 30S ribosomal subunit. Forms a loose heterodimer with protein S19. Forms two bridges to the 50S subunit in the 70S ribosome.

Its function is as follows. Located at the top of the head of the 30S subunit, it contacts several helices of the 16S rRNA. In the 70S ribosome it contacts the 23S rRNA (bridge B1a) and protein L5 of the 50S subunit (bridge B1b), connecting the 2 subunits; these bridges are implicated in subunit movement. Contacts the tRNAs in the A and P-sites. The polypeptide is Small ribosomal subunit protein uS13 (Chlorobium phaeovibrioides (strain DSM 265 / 1930) (Prosthecochloris vibrioformis (strain DSM 265))).